Consider the following 168-residue polypeptide: uncharacterized protein (168 aa).

Residues M1–N10 are compositionally biased toward pro residues. Disordered stretches follow at residues M1–Q23 and E117–Q143.

This is an uncharacterized protein from Homo sapiens (Human).